The sequence spans 855 residues: Beta-mannosidase B (855 aa).

A glycan (N-linked (GlcNAc...) asparagine) is linked at Asn-98. Glu-430 acts as the Proton donor in catalysis. 2 N-linked (GlcNAc...) asparagine glycosylation sites follow: Asn-693 and Asn-730.

The protein belongs to the glycosyl hydrolase 2 family. Beta-mannosidase B subfamily. As to quaternary structure, homodimer.

Its subcellular location is the secreted. The catalysed reaction is Hydrolysis of terminal, non-reducing beta-D-mannose residues in beta-D-mannosides.. The protein operates within glycan metabolism; N-glycan degradation. Exoglycosidase that cleaves the single beta-linked mannose residue from the non-reducing end of beta-mannosidic oligosaccharides of various complexity and length. Prefers mannobiose over mannotriose. Is also severely restricted by galactosyl substitutions at the +1 subsite. Has no activity against polymeric mannan. In Thermothelomyces thermophilus (Myceliophthora thermophila), this protein is Beta-mannosidase B (man9).